The following is a 373-amino-acid chain: tRNA-specific 2-thiouridylase MnmA (373 aa).

Residues 12 to 19 (GMSGGVDS) and M38 contribute to the ATP site. Residues 98–100 (NPD) form an interaction with target base in tRNA region. The active-site Nucleophile is C103. C103 and C200 are joined by a disulfide. Position 127 (G127) interacts with ATP. The interval 150 to 152 (KDQ) is interaction with tRNA. C200 (cysteine persulfide intermediate) is an active-site residue. Positions 312–313 (RY) are interaction with tRNA.

It belongs to the MnmA/TRMU family.

It localises to the cytoplasm. It catalyses the reaction S-sulfanyl-L-cysteinyl-[protein] + uridine(34) in tRNA + AH2 + ATP = 2-thiouridine(34) in tRNA + L-cysteinyl-[protein] + A + AMP + diphosphate + H(+). In terms of biological role, catalyzes the 2-thiolation of uridine at the wobble position (U34) of tRNA, leading to the formation of s(2)U34. In Streptococcus pyogenes serotype M28 (strain MGAS6180), this protein is tRNA-specific 2-thiouridylase MnmA.